The chain runs to 229 residues: MAKKKAFIPFLYFISIVFFPWWISLCCNKSLKTWITNWWNTRQCETFLNEIQEKSLLEKFIQLEELFQLDEMLKEYPETDLQKFRLEIHKETIQFIKIHNEYRIHTIFHFSTNLISFVILSSYSFWGKEKLFILNSWVQEFLYNLSDTIKAFLILLLTDLCIGFHSPHGWELMIGYIYKDFGFAHYEQILSGLVSTFPVILDTIFKYWIFRYLNRVSPSLVVIYHAIND.

4 consecutive transmembrane segments (helical) span residues 6 to 26 (AFIPFLYFISIVFFPWWISLC), 107 to 127 (IFHFSTNLISFVILSSYSFWG), 152 to 172 (FLILLLTDLCIGFHSPHGWEL), and 189 to 209 (ILSGLVSTFPVILDTIFKYWI).

The protein belongs to the CemA family.

Its subcellular location is the plastid. The protein localises to the chloroplast inner membrane. The enzyme catalyses K(+)(in) + H(+)(out) = K(+)(out) + H(+)(in). In terms of biological role, contributes to K(+)/H(+) antiport activity by supporting proton efflux to control proton extrusion and homeostasis in chloroplasts in a light-dependent manner to modulate photosynthesis. Prevents excessive induction of non-photochemical quenching (NPQ) under continuous-light conditions. Indirectly promotes efficient inorganic carbon uptake into chloroplasts. The sequence is that of Potassium/proton antiporter CemA from Aethionema grandiflorum (Persian stone-cress).